The following is a 458-amino-acid chain: COBRA-like protein 2 (458 aa).

A signal peptide spans 1–29; sequence MARFLLGAAAIALLAGVSSLLLMVPFAEA. N-linked (GlcNAc...) asparagine glycosylation is found at Asn-38, Asn-163, Asn-171, Asn-211, Asn-236, Asn-318, Asn-333, and Asn-352. A helical transmembrane segment spans residues 430 to 450; it reads VFLLMSFLVCGTLAFLHNHLV.

It belongs to the COBRA family.

It is found in the membrane. This Oryza sativa subsp. japonica (Rice) protein is COBRA-like protein 2 (BC1L2).